We begin with the raw amino-acid sequence, 334 residues long: Methionine adenosyltransferase 2 subunit beta (334 aa).

NADP(+) contacts are provided by residues Thr-37–Leu-40, Phe-60–Arg-62, Asn-71–Leu-72, Cys-93, Arg-97, Tyr-159, and Leu-185. Thr-309 carries the post-translational modification Phosphothreonine. A required for interaction with MAT2A region spans residues Leu-319–His-334.

This sequence belongs to the dTDP-4-dehydrorhamnose reductase family. MAT2B subfamily. Heterotrimer; composed of a catalytic MAT2A homodimer that binds one regulatory MAT2B chain. Heterohexamer; composed of a central, catalytic MAT2A homotetramer flanked on either side by a regulatory MAT2B chain. NADP binding increases the affinity for MAT2A.

It functions in the pathway amino-acid biosynthesis; S-adenosyl-L-methionine biosynthesis; S-adenosyl-L-methionine from L-methionine: step 1/1. Functionally, regulatory subunit of S-adenosylmethionine synthetase 2, an enzyme that catalyzes the formation of S-adenosylmethionine from methionine and ATP. Regulates MAT2A catalytic activity by changing its kinetic properties, increasing its affinity for L-methionine. Can bind NADP (in vitro). The chain is Methionine adenosyltransferase 2 subunit beta (Mat2b) from Mus musculus (Mouse).